The sequence spans 807 residues: Spondin-1 (807 aa).

Residues 1 to 28 (MRLSPAPLKLSRTPALLALALPLAAALA) form the signal peptide. The 166-residue stretch at 29–194 (FSDETLDKVP…DSTFDGVTDK (166 aa)) folds into the Reelin domain. 17 disulfide bridges follow: C44–C128, C156–C182, C199–C336, C200–C340, C202–C415, C443–C480, C454–C489, C459–C494, C502–C538, C513–C517, C548–C554, C559–C595, C570–C574, C605–C610, C615–C650, C626–C630, and C660–C665. In terms of domain architecture, Spondin spans 195–388 (PILDCCACGT…LTSLDHPQSP (194 aa)). N214 carries an N-linked (GlcNAc...) asparagine glycan. Residues D325, D354, and D358 each coordinate Ca(2+). 6 consecutive TSP type-1 domains span residues 442–495 (TCIY…PGCS), 501–555 (TCTM…EECS), 558–611 (SCLM…PECH), 614–666 (PCLL…PECP), 668–721 (DCEL…RKCL), and 754–806 (GCRM…NVHP). A glycan (C-linked (Man) tryptophan) is linked at W448. C-linked (Man) tryptophan; partial glycosylation occurs at W451. Residue W507 is glycosylated (C-linked (Man) tryptophan). A glycan (C-linked (Man) tryptophan; partial) is linked at W510. C-linked (Man) tryptophan glycosylation occurs at W564. W620 carries C-linked (Man) tryptophan; partial glycosylation. The C-linked (Man) tryptophan glycan is linked to W623. The C-linked (Man) tryptophan glycan is linked to W674. N681 carries N-linked (GlcNAc...) asparagine glycosylation.

In terms of assembly, binds to the central extracellular domain of APP and inhibits beta-secretase cleavage of APP. As to expression, highest expression in lung, lower expression in brain, heart, kidney, liver and testis, and lowest expression in pancreas, skeletal muscle and ovary. Not expressed in spleen.

It localises to the secreted. The protein localises to the extracellular space. Its subcellular location is the extracellular matrix. In terms of biological role, cell adhesion protein that promotes the attachment of spinal cord and sensory neuron cells and the outgrowth of neurites in vitro. May contribute to the growth and guidance of axons in both the spinal cord and the PNS. Major factor for vascular smooth muscle cell. This Homo sapiens (Human) protein is Spondin-1 (SPON1).